The sequence spans 119 residues: Large ribosomal subunit protein bL20 (119 aa).

It belongs to the bacterial ribosomal protein bL20 family.

Binds directly to 23S ribosomal RNA and is necessary for the in vitro assembly process of the 50S ribosomal subunit. It is not involved in the protein synthesizing functions of that subunit. The polypeptide is Large ribosomal subunit protein bL20 (Vesicomyosocius okutanii subsp. Calyptogena okutanii (strain HA)).